Reading from the N-terminus, the 258-residue chain is MCSPTTENNNNNNDHLVQSSDPNHPANLIPALCAKFWTLGWVTGTGGGASIRSDDLVYLAPSGVQKELMKPDDIYVLSLAAQAQSLDKRQRVYLRSPANYKPSQCTPLFLAAFTKRNAGCCIHTHSHWAVLVTLILETQGAGKDREFMINNIEQIKGFGKGFGKSGNLGYHDTLKIPVIENTAHEEDLTEFLEEAMDKYPDTYAVLVRRHGVYVWGENVHKAKTMCESLDYLFQLAVEMKQLGLPWVTDIEPTVPTRK.

Residues 1–21 (MCSPTTENNNNNNDHLVQSSD) form a disordered region. A substrate-binding site is contributed by C105. Zn(2+) is bound by residues H123 and H125. The active-site Proton donor/acceptor is E153. H210 serves as a coordination point for Zn(2+).

This sequence belongs to the aldolase class II family. MtnB subfamily. The cofactor is Zn(2+).

It is found in the cytoplasm. It catalyses the reaction 5-(methylsulfanyl)-D-ribulose 1-phosphate = 5-methylsulfanyl-2,3-dioxopentyl phosphate + H2O. It participates in amino-acid biosynthesis; L-methionine biosynthesis via salvage pathway; L-methionine from S-methyl-5-thio-alpha-D-ribose 1-phosphate: step 2/6. In terms of biological role, catalyzes the dehydration of methylthioribulose-1-phosphate (MTRu-1-P) into 2,3-diketo-5-methylthiopentyl-1-phosphate (DK-MTP-1-P). The protein is Methylthioribulose-1-phosphate dehydratase of Neurospora crassa (strain ATCC 24698 / 74-OR23-1A / CBS 708.71 / DSM 1257 / FGSC 987).